Consider the following 525-residue polypeptide: GMP synthase [glutamine-hydrolyzing] (525 aa).

The Glutamine amidotransferase type-1 domain maps to 8 to 206 (PLLILDFGSQ…VVDICKASTD (199 aa)). The Nucleophile role is filled by Cys85. Catalysis depends on residues His180 and Glu182. The GMPS ATP-PPase domain maps to 207–400 (WTPEHIIDEA…LGLPHDMVYR (194 aa)). 234-240 (SGGVDSS) contacts ATP.

Homodimer.

The enzyme catalyses XMP + L-glutamine + ATP + H2O = GMP + L-glutamate + AMP + diphosphate + 2 H(+). The protein operates within purine metabolism; GMP biosynthesis; GMP from XMP (L-Gln route): step 1/1. In terms of biological role, catalyzes the synthesis of GMP from XMP. The chain is GMP synthase [glutamine-hydrolyzing] from Legionella pneumophila (strain Lens).